We begin with the raw amino-acid sequence, 270 residues long: Phospholipase A and acyltransferase 5 (270 aa).

2 disordered regions span residues 1 to 54 (MGLS…SASS) and 70 to 122 (RRLE…NPRP). Composition is skewed to polar residues over residues 24–54 (TQISKTSSTESSDTQSATGQSTVPHSDSASS) and 100–116 (IPTSNSEIESTQKNQAV). The LRAT domain occupies 127-240 (LIEIFRIGYE…LRYGVPRSQQ (114 aa)). Catalysis depends on residues H137 and H149. C224 serves as the catalytic Acyl-thioester intermediate.

It belongs to the H-rev107 family. In terms of tissue distribution, isoform 4 shows highest expression level in testis.

Its subcellular location is the cytoplasm. The protein localises to the cytosol. It catalyses the reaction a 1,2-diacyl-sn-glycero-3-phosphocholine + H2O = a 1-acyl-sn-glycero-3-phosphocholine + a fatty acid + H(+). It carries out the reaction a 1,2-diacyl-sn-glycero-3-phosphocholine + H2O = a 2-acyl-sn-glycero-3-phosphocholine + a fatty acid + H(+). The catalysed reaction is 1-hexadecanoyl-2-(5Z,8Z,11Z,14Z-eicosatetraenoyl)-sn-glycero-3-phosphocholine + 1,2-di-(9Z-octadecenoyl)-sn-glycero-3-phosphoethanolamine = N-(5Z,8Z,11Z,14Z-eicosatetraenoyl)-1,2-di-(9Z-octadecenoyl)-sn-glycero-3-phosphoethanolamine + 1-hexadecanoyl-sn-glycero-3-phosphocholine + H(+). The enzyme catalyses 1,2-di-(9Z-octadecenoyl)-sn-glycero-3-phosphoethanolamine + 1,2-dihexadecanoyl-sn-glycero-3-phosphocholine = N-hexadecanoyl-1,2-di-(9Z-octadecenoyl)-sn-glycero-3-phosphoethanolamine + 1-hexadecanoyl-sn-glycero-3-phosphocholine + H(+). It catalyses the reaction 1,2-di-(9Z-octadecenoyl)-sn-glycero-3-phosphoethanolamine + 1,2-dihexadecanoyl-sn-glycero-3-phosphocholine = N-hexadecanoyl-1,2-di-(9Z-octadecenoyl)-sn-glycero-3-phosphoethanolamine + 2-hexadecanoyl-sn-glycero-3-phosphocholine + H(+). It carries out the reaction a 1,2-diacyl-sn-glycero-3-phosphoethanolamine + a 1,2-diacyl-sn-glycero-3-phosphocholine = an N-acyl-1,2-diacyl-sn-glycero-3-phosphoethanolamine + a 1-acyl-sn-glycero-3-phosphocholine + H(+). The catalysed reaction is a 1,2-diacyl-sn-glycero-3-phosphoethanolamine + a 1,2-diacyl-sn-glycero-3-phosphocholine = an N-acyl-1,2-diacyl-sn-glycero-3-phosphoethanolamine + a 2-acyl-sn-glycero-3-phosphocholine + H(+). The enzyme catalyses 1-hexadecanoyl-2-(9Z-octadecenoyl)-sn-glycero-3-phosphocholine + 1,2-di-(9Z-octadecenoyl)-sn-glycero-3-phosphoethanolamine = N,1,2-tri-(9Z-octadecenoyl)-sn-glycero-3-phosphoethanolamine + 1-hexadecanoyl-sn-glycero-3-phosphocholine + H(+). Its function is as follows. Exhibits both phospholipase A1/2 and acyltransferase activities. Shows phospholipase A1 (PLA1) and A2 (PLA2) activity, catalyzing the calcium-independent release of fatty acids from the sn-1 or sn-2 position of glycerophospholipids. Shows N-acyltransferase activity, catalyzing the calcium-independent transfer of a fatty acyl group at the sn-1 position of phosphatidylcholine (PC) and other glycerophospholipids to the primary amine of phosphatidylethanolamine (PE), forming N-acylphosphatidylethanolamine (NAPE), which serves as precursor for N-acylethanolamines (NAEs). This is Phospholipase A and acyltransferase 5 from Mus musculus (Mouse).